Reading from the N-terminus, the 110-residue chain is Nucleoid-associated protein Sfri_2406 (110 aa).

It belongs to the YbaB/EbfC family. In terms of assembly, homodimer.

The protein resides in the cytoplasm. Its subcellular location is the nucleoid. Its function is as follows. Binds to DNA and alters its conformation. May be involved in regulation of gene expression, nucleoid organization and DNA protection. The sequence is that of Nucleoid-associated protein Sfri_2406 from Shewanella frigidimarina (strain NCIMB 400).